A 136-amino-acid chain; its full sequence is Histone H3.2 (136 aa).

The interval 1 to 20 (MARTKQTARKSTGGKAPRKQ) is disordered. Lys-5 carries the N6-methylated lysine modification. Position 10 is an N6-acetyllysine; alternate (Lys-10). Lys-10 is modified (N6-methylated lysine; alternate). At Ser-11 the chain carries Phosphoserine. Thr-12 bears the Phosphothreonine mark. Lys-15 carries the post-translational modification N6-acetyllysine. An N6-acetyllysine; alternate mark is found at Lys-19 and Lys-24. Residues Lys-19 and Lys-24 each carry the N6-methylated lysine; alternate modification. Residue Lys-37 is modified to N6-methylated lysine.

It belongs to the histone H3 family. The nucleosome is a histone octamer containing two molecules each of H2A, H2B, H3 and H4 assembled in one H3-H4 heterotetramer and two H2A-H2B heterodimers. The octamer wraps approximately 147 bp of DNA. Acetylation is generally linked to gene activation. Can be acetylated to form H3K9ac, H3K14ac, H3K18ac and H3K23ac. H3K9ac could compete with H3K9me and prevent gene silencing. H3K9ac is restricted to euchromatin. Post-translationally, methylated to form mainly H3K4me, H3K9me, H3K18me, H3K23me and H3K36me. H3K4me1/2/3, H3K9me3 and H3K36me1/2/3 are typical marks for euchromatin, whereas heterochromatic chromocenters are enriched in H3K9me1/2. H2BK143ub1 is probably prerequisite for H3K4me. In terms of processing, can be phosphorylated to form H3S10ph and H3T11ph.

The protein localises to the nucleus. It is found in the chromosome. In terms of biological role, core component of nucleosome. Nucleosomes wrap and compact DNA into chromatin, limiting DNA accessibility to the cellular machineries which require DNA as a template. Histones thereby play a central role in transcription regulation, DNA repair, DNA replication and chromosomal stability. DNA accessibility is regulated via a complex set of post-translational modifications of histones, also called histone code, and nucleosome remodeling. In Cichorium intybus (Chicory), this protein is Histone H3.2.